We begin with the raw amino-acid sequence, 150 residues long: MKNNINILLINGPNLNLLGTRETEIYGDITLPDLLKNLEKRAKKLNMSLKHIQSNAEHVLIDKIHSSRKNINYIIINPAAFTHTSIAIRDALIAVEIPFIEIHISNIYSREDFRSHSWLSDISQGVICGLGLDGYHWALETISNRLIHLK.

Y26 (proton acceptor) is an active-site residue. Substrate contacts are provided by N77, H83, and D90. Residue H103 is the Proton donor of the active site. Substrate is bound by residues 104–105 (IS) and R114.

It belongs to the type-II 3-dehydroquinase family. As to quaternary structure, homododecamer.

It carries out the reaction 3-dehydroquinate = 3-dehydroshikimate + H2O. It participates in metabolic intermediate biosynthesis; chorismate biosynthesis; chorismate from D-erythrose 4-phosphate and phosphoenolpyruvate: step 3/7. Catalyzes a trans-dehydration via an enolate intermediate. The sequence is that of 3-dehydroquinate dehydratase from Buchnera aphidicola subsp. Acyrthosiphon pisum (strain 5A).